Consider the following 101-residue polypeptide: Small ribosomal subunit protein uS14 (101 aa).

It belongs to the universal ribosomal protein uS14 family. Part of the 30S ribosomal subunit. Contacts proteins S3 and S10.

Binds 16S rRNA, required for the assembly of 30S particles and may also be responsible for determining the conformation of the 16S rRNA at the A site. This chain is Small ribosomal subunit protein uS14, found in Actinobacillus pleuropneumoniae serotype 3 (strain JL03).